Consider the following 217-residue polypeptide: Probable GTP-binding protein EngB (217 aa).

The 185-residue stretch at 33-217 (GPTEIAFAGR…RAAIELAVTR (185 aa)) folds into the EngB-type G domain. Residues 41–48 (GRSNVGKS), 68–72 (GRTQE), 95–98 (DMPG), 162–165 (TKTD), and 196–198 (TSS) each bind GTP. Mg(2+)-binding residues include Ser-48 and Thr-70.

The protein belongs to the TRAFAC class TrmE-Era-EngA-EngB-Septin-like GTPase superfamily. EngB GTPase family. The cofactor is Mg(2+).

Necessary for normal cell division and for the maintenance of normal septation. This is Probable GTP-binding protein EngB from Rhizobium meliloti (strain 1021) (Ensifer meliloti).